We begin with the raw amino-acid sequence, 689 residues long: Zinc finger protein 185 (689 aa).

Disordered stretches follow at residues 1–253 (MSIS…GRTK) and 298–534 (APDV…SCTS). The segment covering 35–52 (LKGDKSWITKQDESEGRT) has biased composition (basic and acidic residues). S66 is subject to Phosphoserine. Polar residues predominate over residues 95-114 (IDSSSQPQQQFPKANGTPKS). S153 bears the Phosphoserine mark. A compositionally biased stretch (acidic residues) spans 157–166 (DTEEEEEEEV). Position 206 is a phosphoserine (P206). Composition is skewed to basic and acidic residues over residues 217–232 (KRVEVVEEDGPSEKSQ) and 310–331 (NKDKEAPCSRELQRDLAGEEAF). The span at 338–349 (AARSSAQLSDGN) shows a compositional bias: polar residues. Composition is skewed to low complexity over residues 373–382 (SSSATSVSAV) and 434–444 (DPAVPAQQPAD). T447 bears the Phosphothreonine mark. Residues 448–458 (PERQSSPSGSE) are compositionally biased toward polar residues. A phosphoserine mark is found at S453 and S465. A compositionally biased stretch (polar residues) spans 504 to 524 (PTQQPADPSTPEQQNSPSGSE). Positions 627–689 (GICTYCNREI…HCGKCYEKLF (63 aa)) constitute an LIM zinc-binding domain.

In terms of tissue distribution, expressed in placenta, pancreas and kidney. Also expressed in prostate, testis, ovary and blood.

The protein localises to the cytoplasm. It localises to the cytoskeleton. The protein resides in the cell junction. It is found in the focal adhesion. Functionally, may be involved in the regulation of cellular proliferation and/or differentiation. The polypeptide is Zinc finger protein 185 (ZNF185) (Homo sapiens (Human)).